Consider the following 279-residue polypeptide: Thymidylate synthase (279 aa).

133–134 is a binding site for dUMP; sequence RR. Cysteine 154 functions as the Nucleophile in the catalytic mechanism. DUMP-binding positions include 178–181, asparagine 189, and 219–221; these read RSND and HIY. Position 181 (aspartate 181) interacts with (6R)-5,10-methylene-5,6,7,8-tetrahydrofolate. A (6R)-5,10-methylene-5,6,7,8-tetrahydrofolate-binding site is contributed by alanine 278.

This sequence belongs to the thymidylate synthase family. Bacterial-type ThyA subfamily. In terms of assembly, homodimer.

The protein localises to the cytoplasm. It catalyses the reaction dUMP + (6R)-5,10-methylene-5,6,7,8-tetrahydrofolate = 7,8-dihydrofolate + dTMP. It participates in pyrimidine metabolism; dTTP biosynthesis. Its function is as follows. Catalyzes the reductive methylation of 2'-deoxyuridine-5'-monophosphate (dUMP) to 2'-deoxythymidine-5'-monophosphate (dTMP) while utilizing 5,10-methylenetetrahydrofolate (mTHF) as the methyl donor and reductant in the reaction, yielding dihydrofolate (DHF) as a by-product. This enzymatic reaction provides an intracellular de novo source of dTMP, an essential precursor for DNA biosynthesis. The protein is Thymidylate synthase of Streptococcus mutans serotype c (strain ATCC 700610 / UA159).